A 218-amino-acid polypeptide reads, in one-letter code: Small ribosomal subunit protein uS3c (218 aa).

Residues 47–117 (VRTHIRNSSN…KLKITLSEID (71 aa)) enclose the KH type-2 domain.

This sequence belongs to the universal ribosomal protein uS3 family. In terms of assembly, part of the 30S ribosomal subunit.

Its subcellular location is the plastid. The protein resides in the chloroplast. This Spirogyra maxima (Green alga) protein is Small ribosomal subunit protein uS3c (rps3).